The sequence spans 568 residues: Urease subunit alpha (568 aa).

Positions 130–568 constitute a Urease domain; the sequence is GGIDTHIHFI…LPMAQRYFLF (439 aa). Ni(2+) is bound by residues His135, His137, and Lys218. At Lys218 the chain carries N6-carboxylysine. A substrate-binding site is contributed by His220. Ni(2+) contacts are provided by His247 and His273. His321 serves as the catalytic Proton donor. Asp361 lines the Ni(2+) pocket.

Belongs to the metallo-dependent hydrolases superfamily. Urease alpha subunit family. As to quaternary structure, heterotrimer of UreA (gamma), UreB (beta) and UreC (alpha) subunits. Three heterotrimers associate to form the active enzyme. It depends on Ni cation as a cofactor. In terms of processing, carboxylation allows a single lysine to coordinate two nickel ions.

It is found in the cytoplasm. The catalysed reaction is urea + 2 H2O + H(+) = hydrogencarbonate + 2 NH4(+). The protein operates within nitrogen metabolism; urea degradation; CO(2) and NH(3) from urea (urease route): step 1/1. This chain is Urease subunit alpha, found in Burkholderia cenocepacia (strain ATCC BAA-245 / DSM 16553 / LMG 16656 / NCTC 13227 / J2315 / CF5610) (Burkholderia cepacia (strain J2315)).